The chain runs to 84 residues: UPF0248 protein PF1300 (84 aa).

It belongs to the UPF0248 family.

This chain is UPF0248 protein PF1300, found in Pyrococcus furiosus (strain ATCC 43587 / DSM 3638 / JCM 8422 / Vc1).